Reading from the N-terminus, the 584-residue chain is Vesicular glutamate transporter 2.1 (584 aa).

At 1-70 the chain is on the cytoplasmic side; that stretch reads METPREPAGF…CTCFGLPRRY (70 aa). A helical membrane pass occupies residues 71-91; it reads IIAIMSGLGFCISFGIRCNLG. The Vesicular segment spans residues 92–124; the sequence is VAIVSMVNNSTIHLNGKIIIKEKAKFNWDPETV. N-linked (GlcNAc...) asparagine glycans are attached at residues Asn99 and Asn100. The helical transmembrane segment at 125-145 threads the bilayer; sequence GLIHGSFFWGYIVTQIPGGYI. Residues 146 to 148 lie on the Cytoplasmic side of the membrane; that stretch reads SSR. A helical transmembrane segment spans residues 149–169; sequence LAANRVFGAAILLTSTLNMFI. Residues 170 to 177 lie on the Vesicular side of the membrane; the sequence is PSAARGHY. Residues 178-198 form a helical membrane-spanning segment; sequence GCVIFVRILQGLVEGVTYPAC. The Cytoplasmic portion of the chain corresponds to 199–216; it reads HGIWSKWAPPLERSRLAT. A helical membrane pass occupies residues 217-237; that stretch reads TSFCGSYAGAVIAMPLAGILV. The Vesicular portion of the chain corresponds to 238 to 244; that stretch reads QYTGWSS. Residues 245 to 265 traverse the membrane as a helical segment; the sequence is VFYVYGCFGIFWYMFWILVSY. At 266-310 the chain is on the cytoplasmic side; it reads ESPAEHPTITAEERCYIEESIGESAKLLGPADKFKTPWRKFFTSM. A helical transmembrane segment spans residues 311-331; the sequence is PVYAIIVANFCRSWTFYLLLI. The Vesicular portion of the chain corresponds to 332-349; it reads SQPAYFEEVFGFEISKVG. A helical transmembrane segment spans residues 350 to 370; the sequence is MLSALPHLVMTIIVPIGGQLA. Residues 371–386 are Cytoplasmic-facing; sequence DHLRSKNILSTTTVRK. A helical transmembrane segment spans residues 387 to 407; that stretch reads IMNCGGFGMEATLLLIVGYSH. Over 408 to 409 the chain is Vesicular; it reads SK. A helical transmembrane segment spans residues 410–430; sequence GVAISFLVLAVGFSGFAISGF. The Cytoplasmic segment spans residues 431 to 445; it reads NVNHLDIAPRYASIL. A helical membrane pass occupies residues 446–466; that stretch reads MGISNGVGTLSGMVCPLIVGA. At 467 to 477 the chain is on the vesicular side; the sequence is MTKHKTREEWQ. The chain crosses the membrane as a helical span at residues 478–498; it reads YVFLIASLVHYGGVIFYGIFA. Over 499–584 the chain is Cytoplasmic; it reads SGEKQPWADP…YGYRQGGNYS (86 aa).

It belongs to the major facilitator superfamily. Sodium/anion cotransporter family. VGLUT subfamily. As to expression, expressed in spinal cord and retinal ganglion cells.

The protein localises to the cytoplasmic vesicle. Its subcellular location is the secretory vesicle. It is found in the synaptic vesicle membrane. The protein resides in the membrane. It localises to the synapse. The protein localises to the synaptosome. Its subcellular location is the cell membrane. The catalysed reaction is L-glutamate(out) = L-glutamate(in). The enzyme catalyses 3 Na(+)(out) + phosphate(out) = 3 Na(+)(in) + phosphate(in). It catalyses the reaction phosphate(in) = phosphate(out). It carries out the reaction K(+)(in) + H(+)(out) = K(+)(out) + H(+)(in). The catalysed reaction is chloride(in) = chloride(out). Chloride channel activity is allosterically activated by lumenal H(+) and Cl(-) leading to synaptic vesicles acidification. The L-glutamate transport activity is allosterically activated by lumenal H(+) and Cl(-). The allosteric requirement for H(+) efficiently prevents non-vesicular efflux across the plasma membrane. The L-glutamate uniporter activity exhibits a biphasic dependence on chloride concentration. Multifunctional transporter that transports L-glutamate as well as multiple ions such as chloride, proton, potassium, sodium and phosphate. At the synaptic vesicle membrane, mainly functions as a uniporter which transports preferentially L-glutamate but also, phosphate from the cytoplasm into synaptic vesicles at presynaptic nerve terminals of excitatory neural cells. The L-glutamate or phosphate uniporter activity is electrogenic and is driven by the proton electrochemical gradient, mainly by the electrical gradient established by the vacuolar H(+)-ATPase across the synaptic vesicle membrane. In addition, functions as a chloride channel that allows a chloride permeation through the synaptic vesicle membrane therefore affects the proton electrochemical gradient and promotes synaptic vesicles acidification. Moreover, functions as a vesicular K(+)/H(+) antiport allowing to maintain the electrical gradient and to decrease chemical gradient and therefore sustain vesicular L-glutamate uptake. The vesicular H(+)/H(+) antiport activity is electroneutral. At the plasma membrane, following exocytosis, functions as a symporter of Na(+) and phosphate from the extracellular space to the cytoplasm allowing synaptic phosphate homeostasis regulation. The symporter activity is driven by an inside negative membrane potential and is electrogenic. Also involved in the regulation of retinal hyaloid vessel regression during postnatal development. May also play a role in the endocrine L-glutamatergic system of other tissues such as pineal gland and pancreas. Required for glutamate release by retinotectal synapses and visual acuity. In Danio rerio (Zebrafish), this protein is Vesicular glutamate transporter 2.1 (slc17a6b).